The following is a 210-amino-acid chain: ESCRT-III complex subunit did4 (210 aa).

A disordered region spans residues 1–38; it reads MGLTSWLFGGGKSPQEQLRAHQRSLGRAERELDRERTK. A coiled-coil region spans residues 15–97; the sequence is QEQLRAHQRS…AISLRLQTMR (83 aa). Residues 26–38 show a composition bias toward basic and acidic residues; that stretch reads GRAERELDRERTK.

This sequence belongs to the SNF7 family. In terms of assembly, core component of the ESCRT-III complex (endosomal sorting required for transport complex III). ESCRT-III appears to be sequentially assembled as a flat lattice on the endosome membrane.

The protein localises to the cytoplasm. It is found in the endosome membrane. In terms of biological role, required for the sorting and concentration of proteins resulting in the entry of these proteins into the invaginating vesicles of the multivesicular body (MVB). Acts a component of the ESCRT-III complex, which appears to be critical for late steps in MVB sorting, such as membrane invagination and final cargo sorting and recruitment of late-acting components of the sorting machinery. The MVB pathway requires the sequential function of ESCRT-O, -I,-II and -III complex assemblies. This is ESCRT-III complex subunit did4 (did4) from Schizosaccharomyces pombe (strain 972 / ATCC 24843) (Fission yeast).